A 429-amino-acid chain; its full sequence is Glycine betaine monooxygenase oxygenase subunit (429 aa).

Residues tryptophan 56–isoleucine 163 form the Rieske domain. The [2Fe-2S] cluster site is built by cysteine 98, histidine 100, cysteine 118, and histidine 121. Fe cation is bound by residues histidine 217 and histidine 222.

The protein belongs to the bacterial ring-hydroxylating dioxygenase alpha subunit family. In terms of assembly, the system is composed of an oxygenase subunit (GbcA) and a reductase subunit (GbcB). The cofactor is [2Fe-2S] cluster. It depends on Fe cation as a cofactor.

The enzyme catalyses glycine betaine + NADH + O2 + H(+) = N,N-dimethylglycine + formaldehyde + NAD(+) + H2O. In terms of biological role, involved in degradation of glycine betaine. Part of a Rieske-type oxygenase system that catalyzes the conversion of glycine betaine (GB) to dimethylglycine (DMG). This subunit is the terminal oxygenase component of the system. The protein is Glycine betaine monooxygenase oxygenase subunit of Pseudomonas aeruginosa (strain UCBPP-PA14).